A 516-amino-acid polypeptide reads, in one-letter code: Glutamyl-tRNA(Gln) amidotransferase subunit B, mitochondrial (516 aa).

Belongs to the GatB/GatE family. GatB subfamily. In terms of assembly, subunit of the heterotrimeric GatCAB amidotransferase (AdT) complex, composed of A, B and C subunits.

The protein localises to the mitochondrion. The enzyme catalyses L-glutamyl-tRNA(Gln) + L-glutamine + ATP + H2O = L-glutaminyl-tRNA(Gln) + L-glutamate + ADP + phosphate + H(+). In terms of biological role, allows the formation of correctly charged Gln-tRNA(Gln) through the transamidation of misacylated Glu-tRNA(Gln) in the mitochondria. The reaction takes place in the presence of glutamine and ATP through an activated gamma-phospho-Glu-tRNA(Gln). The protein is Glutamyl-tRNA(Gln) amidotransferase subunit B, mitochondrial of Drosophila melanogaster (Fruit fly).